A 136-amino-acid chain; its full sequence is Large ribosomal subunit protein uL16 (136 aa).

Belongs to the universal ribosomal protein uL16 family. In terms of assembly, part of the 50S ribosomal subunit.

In terms of biological role, binds 23S rRNA and is also seen to make contacts with the A and possibly P site tRNAs. In Rickettsia typhi (strain ATCC VR-144 / Wilmington), this protein is Large ribosomal subunit protein uL16.